We begin with the raw amino-acid sequence, 378 residues long: Transaldolase 1 (378 aa).

Residue Lys146 is the Schiff-base intermediate with substrate of the active site.

It belongs to the transaldolase family. Type 2 subfamily.

The protein resides in the cytoplasm. It carries out the reaction D-sedoheptulose 7-phosphate + D-glyceraldehyde 3-phosphate = D-erythrose 4-phosphate + beta-D-fructose 6-phosphate. The protein operates within carbohydrate degradation; pentose phosphate pathway; D-glyceraldehyde 3-phosphate and beta-D-fructose 6-phosphate from D-ribose 5-phosphate and D-xylulose 5-phosphate (non-oxidative stage): step 2/3. Functionally, transaldolase is important for the balance of metabolites in the pentose-phosphate pathway. The protein is Transaldolase 1 of Streptomyces avermitilis (strain ATCC 31267 / DSM 46492 / JCM 5070 / NBRC 14893 / NCIMB 12804 / NRRL 8165 / MA-4680).